Here is a 478-residue protein sequence, read N- to C-terminus: Sulfate adenylyltransferase subunit 1 (478 aa).

The tr-type G domain occupies 28–244 (KTMLRFLTCG…LESVDVVNAR (217 aa)). The interval 37–44 (GSVDDGKS) is G1. 37 to 44 (GSVDDGKS) contributes to the GTP binding site. Positions 95–99 (GITID) are G2. Residues 116 to 119 (DTPG) form a G3 region. GTP-binding positions include 116–120 (DTPGH) and 171–174 (NKMD). The segment at 171 to 174 (NKMD) is G4. The tract at residues 209–211 (SAL) is G5.

It belongs to the TRAFAC class translation factor GTPase superfamily. Classic translation factor GTPase family. CysN/NodQ subfamily. In terms of assembly, heterodimer composed of CysD, the smaller subunit, and CysN.

The enzyme catalyses sulfate + ATP + H(+) = adenosine 5'-phosphosulfate + diphosphate. Its pathway is sulfur metabolism; hydrogen sulfide biosynthesis; sulfite from sulfate: step 1/3. Functionally, with CysD forms the ATP sulfurylase (ATPS) that catalyzes the adenylation of sulfate producing adenosine 5'-phosphosulfate (APS) and diphosphate, the first enzymatic step in sulfur assimilation pathway. APS synthesis involves the formation of a high-energy phosphoric-sulfuric acid anhydride bond driven by GTP hydrolysis by CysN coupled to ATP hydrolysis by CysD. This chain is Sulfate adenylyltransferase subunit 1, found in Yersinia pseudotuberculosis serotype O:1b (strain IP 31758).